The following is a 447-amino-acid chain: Argininosuccinate synthase (447 aa).

Residues 17–25 (AFSGGLDTS) and Ala-43 each bind ATP. Tyr-99 is an L-citrulline binding site. Residues Gly-129 and Thr-131 each coordinate ATP. Positions 131, 135, and 136 each coordinate L-aspartate. Asn-135 is a binding site for L-citrulline. Asp-136 contributes to the ATP binding site. L-citrulline-binding residues include Arg-139 and Ser-192. Asp-194 is a binding site for ATP. L-citrulline contacts are provided by Thr-201, Glu-203, and Glu-280.

This sequence belongs to the argininosuccinate synthase family. Type 2 subfamily. In terms of assembly, homotetramer.

It localises to the cytoplasm. It carries out the reaction L-citrulline + L-aspartate + ATP = 2-(N(omega)-L-arginino)succinate + AMP + diphosphate + H(+). It participates in amino-acid biosynthesis; L-arginine biosynthesis; L-arginine from L-ornithine and carbamoyl phosphate: step 2/3. In Escherichia coli (strain K12 / MC4100 / BW2952), this protein is Argininosuccinate synthase.